The following is a 388-amino-acid chain: Succinate--CoA ligase [ADP-forming] subunit beta (388 aa).

The ATP-grasp domain maps to 9-236; it reads KKLFAEHGVP…VAAVDPLEQK (228 aa). ATP is bound by residues Lys-45, 52–54, Glu-91, Ser-94, and Glu-99; that span reads GRG. Residues Asn-191 and Asp-205 each coordinate Mg(2+). Substrate contacts are provided by residues Asn-256 and 318–320; that span reads GIT.

Belongs to the succinate/malate CoA ligase beta subunit family. In terms of assembly, heterotetramer of two alpha and two beta subunits. Mg(2+) serves as cofactor.

The catalysed reaction is succinate + ATP + CoA = succinyl-CoA + ADP + phosphate. The enzyme catalyses GTP + succinate + CoA = succinyl-CoA + GDP + phosphate. It functions in the pathway carbohydrate metabolism; tricarboxylic acid cycle; succinate from succinyl-CoA (ligase route): step 1/1. Functionally, succinyl-CoA synthetase functions in the citric acid cycle (TCA), coupling the hydrolysis of succinyl-CoA to the synthesis of either ATP or GTP and thus represents the only step of substrate-level phosphorylation in the TCA. The beta subunit provides nucleotide specificity of the enzyme and binds the substrate succinate, while the binding sites for coenzyme A and phosphate are found in the alpha subunit. In Parafrankia sp. (strain EAN1pec), this protein is Succinate--CoA ligase [ADP-forming] subunit beta.